We begin with the raw amino-acid sequence, 369 residues long: tRNA/tmRNA (uracil-C(5))-methyltransferase (369 aa).

S-adenosyl-L-methionine contacts are provided by glutamine 190, tyrosine 218, asparagine 223, glutamate 239, and aspartate 301. The active-site Nucleophile is the cysteine 326. Glutamate 360 (proton acceptor) is an active-site residue.

It belongs to the class I-like SAM-binding methyltransferase superfamily. RNA M5U methyltransferase family. TrmA subfamily.

It carries out the reaction uridine(54) in tRNA + S-adenosyl-L-methionine = 5-methyluridine(54) in tRNA + S-adenosyl-L-homocysteine + H(+). The catalysed reaction is uridine(341) in tmRNA + S-adenosyl-L-methionine = 5-methyluridine(341) in tmRNA + S-adenosyl-L-homocysteine + H(+). Dual-specificity methyltransferase that catalyzes the formation of 5-methyluridine at position 54 (m5U54) in all tRNAs, and that of position 341 (m5U341) in tmRNA (transfer-mRNA). In Vibrio cholerae serotype O1 (strain ATCC 39541 / Classical Ogawa 395 / O395), this protein is tRNA/tmRNA (uracil-C(5))-methyltransferase.